The chain runs to 123 residues: Cytochrome b-c1 complex subunit 7 (123 aa).

It belongs to the UQCRB/QCR7 family. Component of the ubiquinol-cytochrome c oxidoreductase (cytochrome b-c1 complex, complex III, CIII), a multisubunit enzyme composed of 3 respiratory subunits cytochrome b, cytochrome c1 and Rieske protein, 2 core protein subunits, and additional low-molecular weight protein subunits. The complex exists as an obligatory dimer and forms supercomplexes (SCs) in the inner mitochondrial membrane with cytochrome c oxidase (complex IV, CIV). Post-translationally, the N-terminus is blocked.

It is found in the mitochondrion inner membrane. Functionally, component of the ubiquinol-cytochrome c oxidoreductase, a multisubunit transmembrane complex that is part of the mitochondrial electron transport chain which drives oxidative phosphorylation. The respiratory chain contains 3 multisubunit complexes succinate dehydrogenase (complex II, CII), ubiquinol-cytochrome c oxidoreductase (cytochrome b-c1 complex, complex III, CIII) and cytochrome c oxidase (complex IV, CIV), that cooperate to transfer electrons derived from NADH and succinate to molecular oxygen, creating an electrochemical gradient over the inner membrane that drives transmembrane transport and the ATP synthase. The cytochrome b-c1 complex catalyzes electron transfer from ubiquinol to cytochrome c, linking this redox reaction to translocation of protons across the mitochondrial inner membrane, with protons being carried across the membrane as hydrogens on the quinol. In the process called Q cycle, 2 protons are consumed from the matrix, 4 protons are released into the intermembrane space and 2 electrons are passed to cytochrome c. The sequence is that of Cytochrome b-c1 complex subunit 7 from Solanum tuberosum (Potato).